The primary structure comprises 119 residues: UPF0102 protein FN1370 (119 aa).

This sequence belongs to the UPF0102 family.

The sequence is that of UPF0102 protein FN1370 from Fusobacterium nucleatum subsp. nucleatum (strain ATCC 25586 / DSM 15643 / BCRC 10681 / CIP 101130 / JCM 8532 / KCTC 2640 / LMG 13131 / VPI 4355).